A 281-amino-acid polypeptide reads, in one-letter code: Ribosomal RNA small subunit methyltransferase I (281 aa).

Belongs to the methyltransferase superfamily. RsmI family.

The protein resides in the cytoplasm. It carries out the reaction cytidine(1402) in 16S rRNA + S-adenosyl-L-methionine = 2'-O-methylcytidine(1402) in 16S rRNA + S-adenosyl-L-homocysteine + H(+). Functionally, catalyzes the 2'-O-methylation of the ribose of cytidine 1402 (C1402) in 16S rRNA. The sequence is that of Ribosomal RNA small subunit methyltransferase I from Erythrobacter litoralis (strain HTCC2594).